The sequence spans 454 residues: Trigger factor (454 aa).

The PPIase FKBP-type domain occupies 169–261; the sequence is GDVAIADYEG…LKELKSRELP (93 aa).

This sequence belongs to the FKBP-type PPIase family. Tig subfamily.

Its subcellular location is the cytoplasm. It carries out the reaction [protein]-peptidylproline (omega=180) = [protein]-peptidylproline (omega=0). Functionally, involved in protein export. Acts as a chaperone by maintaining the newly synthesized protein in an open conformation. Functions as a peptidyl-prolyl cis-trans isomerase. The chain is Trigger factor from Picosynechococcus sp. (strain ATCC 27264 / PCC 7002 / PR-6) (Agmenellum quadruplicatum).